A 197-amino-acid polypeptide reads, in one-letter code: Large ribosomal subunit protein bL25 (197 aa).

This sequence belongs to the bacterial ribosomal protein bL25 family. CTC subfamily. As to quaternary structure, part of the 50S ribosomal subunit; part of the 5S rRNA/L5/L18/L25 subcomplex. Contacts the 5S rRNA. Binds to the 5S rRNA independently of L5 and L18.

This is one of the proteins that binds to the 5S RNA in the ribosome where it forms part of the central protuberance. This Pseudomonas putida (strain GB-1) protein is Large ribosomal subunit protein bL25.